The following is a 290-amino-acid chain: Fructose-1,6-bisphosphatase class 1 (290 aa).

Glu78, Asp96, Leu98, and Asp99 together coordinate Mg(2+). Residues 99 to 102, Tyr201, and Lys226 contribute to the substrate site; that span reads DGSS. Glu232 contributes to the Mg(2+) binding site.

The protein belongs to the FBPase class 1 family. As to quaternary structure, homotetramer. It depends on Mg(2+) as a cofactor.

It localises to the cytoplasm. It catalyses the reaction beta-D-fructose 1,6-bisphosphate + H2O = beta-D-fructose 6-phosphate + phosphate. Its pathway is carbohydrate biosynthesis; gluconeogenesis. This Helicobacter pylori (strain ATCC 700392 / 26695) (Campylobacter pylori) protein is Fructose-1,6-bisphosphatase class 1.